Consider the following 433-residue polypeptide: Enolase (433 aa).

(2R)-2-phosphoglycerate is bound at residue Gln-166. Glu-208 serves as the catalytic Proton donor. Positions 245, 290, and 317 each coordinate Mg(2+). 4 residues coordinate (2R)-2-phosphoglycerate: Lys-342, Arg-371, Ser-372, and Lys-393. The active-site Proton acceptor is the Lys-342.

Belongs to the enolase family. It depends on Mg(2+) as a cofactor.

It localises to the cytoplasm. The protein localises to the secreted. It is found in the cell surface. The catalysed reaction is (2R)-2-phosphoglycerate = phosphoenolpyruvate + H2O. It participates in carbohydrate degradation; glycolysis; pyruvate from D-glyceraldehyde 3-phosphate: step 4/5. Its function is as follows. Catalyzes the reversible conversion of 2-phosphoglycerate (2-PG) into phosphoenolpyruvate (PEP). It is essential for the degradation of carbohydrates via glycolysis. The sequence is that of Enolase from Clostridium novyi (strain NT).